The sequence spans 397 residues: Elongation factor Tu (397 aa).

Residues 10 to 207 (KPHVNIGTIG…AVDESIPDPV (198 aa)) enclose the tr-type G domain. Residues 19–26 (GHVDHGKT) are G1. 19 to 26 (GHVDHGKT) serves as a coordination point for GTP. Thr26 contacts Mg(2+). Residues 63-67 (GITIN) are G2. Residues 84-87 (DAPG) form a G3 region. GTP is bound by residues 84-88 (DAPGH) and 139-142 (NKAD). Residues 139 to 142 (NKAD) are G4. Residues 177-179 (SGL) are G5.

The protein belongs to the TRAFAC class translation factor GTPase superfamily. Classic translation factor GTPase family. EF-Tu/EF-1A subfamily. In terms of assembly, monomer.

Its subcellular location is the cytoplasm. It catalyses the reaction GTP + H2O = GDP + phosphate + H(+). GTP hydrolase that promotes the GTP-dependent binding of aminoacyl-tRNA to the A-site of ribosomes during protein biosynthesis. In Tropheryma whipplei (strain TW08/27) (Whipple's bacillus), this protein is Elongation factor Tu.